Here is a 465-residue protein sequence, read N- to C-terminus: Asparagine--tRNA ligase (465 aa).

The protein belongs to the class-II aminoacyl-tRNA synthetase family. In terms of assembly, homodimer.

The protein resides in the cytoplasm. It carries out the reaction tRNA(Asn) + L-asparagine + ATP = L-asparaginyl-tRNA(Asn) + AMP + diphosphate + H(+). The protein is Asparagine--tRNA ligase of Pseudoalteromonas translucida (strain TAC 125).